Consider the following 305-residue polypeptide: Endonuclease 1 (305 aa).

A signal peptide spans 1–28; it reads MASAFRSSTRLILVLGILILCSVSSVRS. A divalent metal cation-binding residues include tryptophan 29 and histidine 34. 29–34 contributes to the substrate binding site; it reads WSKEGH. Cysteine 38 and cysteine 69 are joined by a disulfide. A divalent metal cation contacts are provided by aspartate 73 and histidine 88. Residues 73-79, 88-91, and 98-103 contribute to the substrate site; these read DQIRHWY, HYID, and SYEYSR. Disulfide bonds link cysteine 97–cysteine 249, cysteine 105–cysteine 115, and cysteine 230–cysteine 236. Substrate contacts are provided by asparagine 122 and tyrosine 139. Asparagine 122 carries an N-linked (GlcNAc...) asparagine glycan. Asparagine 140 is a glycosylation site (N-linked (GlcNAc...) asparagine). A divalent metal cation contacts are provided by histidine 150, aspartate 154, histidine 160, histidine 184, and aspartate 188. The substrate binding stretch occupies residues 150-199; that stretch reads HFMGDIHQPMHVGFTSDEGGNTIDLRWYKHKSNLHHVWDREIILTALKEN. N-linked (GlcNAc...) asparagine glycosylation is present at asparagine 214. The propeptide at 287 to 305 is removed in mature form; it reads MILNRVFSDDHAIAGVAAT.

Belongs to the nuclease type I family. Monomer. Requires Mn(2+) as cofactor. Ca(2+) is required as a cofactor. Mostly expressed in flowers and during leaf and stem senescence, and, to a lower extent, detectable at low levels in roots, leaves, and stems. Particularly expressed in senescing tissues in a NAC92/ORE1-dependent manner.

The enzyme catalyses Endonucleolytic cleavage to 5'-phosphomononucleotide and 5'-phosphooligonucleotide end-products.. In terms of biological role, endonuclease that can use RNA, single-stranded and double-stranded DNA as substrates. Hydrolyzes single-stranded DNA and RNA without apparent specificity for bases during senescence. Endonuclease that recognizes and cleaves all types of mismatches with high efficiency, including heteroduplex double-stranded DNA. Maybe involved in programmed cell death (PCD) and senescence. The protein is Endonuclease 1 of Arabidopsis thaliana (Mouse-ear cress).